The following is a 311-amino-acid chain: MKVAVLGAAGGIGQALALLLKLQLPAGTDLSLYDIAPVTPGVAVDVSHIPTAVNVKGFSGEDPTPALEGADVVLISAGVARKPGMDRSDLFNINAGIVRGLIEKVAVTCPKACVGIITNPVNTTVAIAAEVLKKAGVYDKRKLFGVTTLDVLRSETFVAELKGLNVSRTSVPVIGGHSGVTILPLLSQVQYAKWNEDEIEPLTKRIQNAGTEVLNAKAGGGSATLSMAQAAARFARSLVKGLSGETVVECTYVEGDGKYARFFSQPVRLGKEGVEEILPIGPLSNFEQQALENMLPTLRADIELGEKFING.

NAD(+)-binding positions include 7-13 and aspartate 34; that span reads GAAGGIG. The substrate site is built by arginine 81 and arginine 87. NAD(+) contacts are provided by residues asparagine 94 and 117–119; that span reads ITN. 2 residues coordinate substrate: asparagine 119 and arginine 153. Histidine 177 functions as the Proton acceptor in the catalytic mechanism. Methionine 227 is an NAD(+) binding site.

The protein belongs to the LDH/MDH superfamily. MDH type 1 family. As to quaternary structure, homodimer.

The enzyme catalyses (S)-malate + NAD(+) = oxaloacetate + NADH + H(+). Its function is as follows. Catalyzes the reversible oxidation of malate to oxaloacetate. This chain is Malate dehydrogenase (mdh), found in Haemophilus influenzae (strain ATCC 51907 / DSM 11121 / KW20 / Rd).